Here is a 135-residue protein sequence, read N- to C-terminus: MGRQRQQRSRGSRSRRRVRKNISTAVVHIKSSFNNTIISVTDQEGNVIAWESAGSMGFKGSRKSTPYAAQMTAESAANKAMEHGVKRVDIQVKGHGSGRDMAARTFQAMGIEVLSIKDVTGQPHNGCRPPKRRRG.

A disordered region spans residues 1 to 20 (MGRQRQQRSRGSRSRRRVRK).

Belongs to the universal ribosomal protein uS11 family. Part of the 30S ribosomal subunit. Interacts with proteins S7 and S18. Binds to IF-3.

In terms of biological role, located on the platform of the 30S subunit, it bridges several disparate RNA helices of the 16S rRNA. Forms part of the Shine-Dalgarno cleft in the 70S ribosome. The sequence is that of Small ribosomal subunit protein uS11 from Rubrobacter xylanophilus (strain DSM 9941 / JCM 11954 / NBRC 16129 / PRD-1).